The following is a 173-amino-acid chain: Avenin-like a5 (173 aa).

A signal peptide spans 1-19 (MKTMLILALIALAATSVVA).

It belongs to the prolamin family. Post-translationally, contains 7 disulfide bonds.

In terms of biological role, seed storage protein. Not integrated in the gluten polymer through disulfide bonds, unless incorporated by reduction and reoxidation during dough making. Increases dough strength and bread volume, but decreases dough stability when added into a base wheat flour. This chain is Avenin-like a5, found in Triticum aestivum (Wheat).